The chain runs to 146 residues: L-fucose mutarotase (146 aa).

His-22 (proton donor) is an active-site residue. Residues Asp-30, Arg-109, and Tyr-131–Asn-133 contribute to the substrate site.

It belongs to the RbsD / FucU family. FucU mutarotase subfamily. In terms of assembly, homodecamer.

The protein localises to the cytoplasm. The catalysed reaction is alpha-L-fucose = beta-L-fucose. It functions in the pathway carbohydrate metabolism; L-fucose metabolism. Its function is as follows. Involved in the anomeric conversion of L-fucose. The polypeptide is L-fucose mutarotase (Glaesserella parasuis serovar 5 (strain SH0165) (Haemophilus parasuis)).